The following is a 199-amino-acid chain: Recombination protein RecR (199 aa).

The C4-type zinc finger occupies 57–72; the sequence is CRQCRVLTEEPVCGLC. The region spanning 80-175 is the Toprim domain; the sequence is SLLCVVEGPA…RTTRIAHGVP (96 aa).

The protein belongs to the RecR family.

May play a role in DNA repair. It seems to be involved in an RecBC-independent recombinational process of DNA repair. It may act with RecF and RecO. The chain is Recombination protein RecR from Alkalilimnicola ehrlichii (strain ATCC BAA-1101 / DSM 17681 / MLHE-1).